We begin with the raw amino-acid sequence, 411 residues long: Alpha-1-antitrypsin 1-6 (411 aa).

An N-terminal signal peptide occupies residues 1 to 25 (MTTPFSSHGLLLLVGLCCLLLITKT). Residues Asn-50, Asn-89, Asn-101, and Asn-164 are each glycosylated (N-linked (GlcNAc...) asparagine).

It belongs to the serpin family. Expressed predominantly in epididymis where it is found in the epithelial cells of the caput, corpus and cauda epididymis.

The protein localises to the secreted. Inhibitor of serine proteases. The polypeptide is Alpha-1-antitrypsin 1-6 (Mus musculus (Mouse)).